An 82-amino-acid polypeptide reads, in one-letter code: Bowman-Birk type proteinase inhibitor (82 aa).

The segment at serine 1–cysteine 24 is disordered. 7 disulfide bridges follow: cysteine 18/cysteine 72, cysteine 19/cysteine 34, cysteine 22/cysteine 68, cysteine 24/cysteine 32, cysteine 42/cysteine 49, cysteine 46/cysteine 61, and cysteine 51/cysteine 59.

This sequence belongs to the Bowman-Birk serine protease inhibitor family.

In terms of biological role, trypsin and chymotrypsin are inhibited simultaneously. There are two separate reactive sites for trypsin and chymotrypsin but they do not inhibit simultaneously. This Phaseolus angularis (Azuki bean) protein is Bowman-Birk type proteinase inhibitor.